Reading from the N-terminus, the 150-residue chain is Large ribosomal subunit protein bL9 (150 aa).

It belongs to the bacterial ribosomal protein bL9 family.

In terms of biological role, binds to the 23S rRNA. This Buchnera aphidicola subsp. Schizaphis graminum (strain Sg) protein is Large ribosomal subunit protein bL9.